A 334-amino-acid chain; its full sequence is Isocitrate/homoisocitrate dehydrogenase (334 aa).

Alanine 70–serine 72 is a binding site for NADH. (2R,3S)-homoisocitrate-binding residues include serine 72, arginine 85, arginine 88, arginine 98, arginine 118, tyrosine 125, lysine 171, and asparagine 173. Asparagine 173 lines the NADH pocket. The Mg(2+) site is built by aspartate 204, aspartate 228, and aspartate 232. NADH is bound by residues glycine 261–aspartate 265 and asparagine 273.

It belongs to the isocitrate and isopropylmalate dehydrogenases family. Homotetramer. Dimer of dimers. The homotetramer can transiently dissociate into homodimers. Mg(2+) is required as a cofactor.

The enzyme catalyses (2R,3S)-homoisocitrate + NAD(+) = 2-oxoadipate + CO2 + NADH. It carries out the reaction D-threo-isocitrate + NAD(+) = 2-oxoglutarate + CO2 + NADH. The protein operates within amino-acid biosynthesis; L-lysine biosynthesis via AAA pathway; L-alpha-aminoadipate from 2-oxoglutarate: step 4/5. In terms of biological role, catalyzes the NAD(+)-dependent oxidative decarboxylation of homoisocitrate to 2-oxoadipate (alpha-ketoadipate), a reaction involved in lysine biosynthesis through the alpha-aminoadipate pathway. In addition, has high activity with isocitrate, but is inactive with 3-isopropylmalate. The polypeptide is Isocitrate/homoisocitrate dehydrogenase (hicd) (Thermus thermophilus (strain ATCC BAA-163 / DSM 7039 / HB27)).